Reading from the N-terminus, the 675-residue chain is Cytoplasmic tyrosine-protein kinase BMX (675 aa).

The PH domain occupies 4–111 (KSILEELLLK…WLKALQKEIR (108 aa)). A Btk-type zinc finger spans residues 113–149 (NPHLLVKYHSGFFVDGKFLCCQQSCKAAPGCTLWEAY). 4 residues coordinate Zn(2+): His-121, Cys-132, Cys-133, and Cys-143. Phosphotyrosine; by autocatalysis is present on residues Tyr-216 and Tyr-224. The SH2 domain occupies 296–392 (WFAGNISRSQ…GMITRLRHPV (97 aa)). A Protein kinase domain is found at 417–675 (ITLLKELGSG…IEPLREKDKH (259 aa)). ATP is bound by residues 423-431 (LGSGQFGVV) and Lys-445. Catalysis depends on Asp-536, which acts as the Proton acceptor. At Tyr-566 the chain carries Phosphotyrosine; by SRC and autocatalysis. A CAV1-binding motif is present at residues 596–603 (WAFGILMW).

Belongs to the protein kinase superfamily. Tyr protein kinase family. TEC subfamily. Interacts with BCAR1, CAV1, MYD88, PTK2/FAK1, RUFY1, RUFY2, STAT3, TIRAP and TNFRSF1B. It depends on Zn(2+) as a cofactor. Post-translationally, phosphorylated in response to protein I/II and to LPS. Phosphorylation at Tyr-566 by SRC and by autocatalysis leads to activation and is required for STAT3 phosphorylation by BMX. Highly expressed in cells with great migratory potential, including endothelial cells and metastatic carcinoma cell lines.

It localises to the cytoplasm. It catalyses the reaction L-tyrosyl-[protein] + ATP = O-phospho-L-tyrosyl-[protein] + ADP + H(+). With respect to regulation, TEK and vascular endothelial growth factor receptor 1 (FLT1) stimulate BMX tyrosine kinase activity. Activated by integrins through the mediation of PTK2/FAK1. Activated by TNF through the mediation of TNFRSF1B. Non-receptor tyrosine kinase that plays central but diverse modulatory roles in various signaling processes involved in the regulation of actin reorganization, cell migration, cell proliferation and survival, cell adhesion, and apoptosis. Participates in signal transduction stimulated by growth factor receptors, cytokine receptors, G-protein coupled receptors, antigen receptors and integrins. Induces tyrosine phosphorylation of BCAR1 in response to integrin regulation. Activation of BMX by integrins is mediated by PTK2/FAK1, a key mediator of integrin signaling events leading to the regulation of actin cytoskeleton and cell motility. Plays a critical role in TNF-induced angiogenesis, and implicated in the signaling of TEK and FLT1 receptors, 2 important receptor families essential for angiogenesis. Required for the phosphorylation and activation of STAT3, a transcription factor involved in cell differentiation. Also involved in interleukin-6 (IL6) induced differentiation. Also plays a role in programming adaptive cytoprotection against extracellular stress in different cell systems, salivary epithelial cells, brain endothelial cells, and dermal fibroblasts. May be involved in regulation of endocytosis through its interaction with an endosomal protein RUFY1. May also play a role in the growth and differentiation of hematopoietic cells; as well as in signal transduction in endocardial and arterial endothelial cells. This chain is Cytoplasmic tyrosine-protein kinase BMX (BMX), found in Homo sapiens (Human).